Reading from the N-terminus, the 327-residue chain is Methionyl-tRNA formyltransferase (327 aa).

Position 113–116 (113–116) interacts with (6S)-5,6,7,8-tetrahydrofolate; it reads SILP.

This sequence belongs to the Fmt family.

The catalysed reaction is L-methionyl-tRNA(fMet) + (6R)-10-formyltetrahydrofolate = N-formyl-L-methionyl-tRNA(fMet) + (6S)-5,6,7,8-tetrahydrofolate + H(+). Its function is as follows. Attaches a formyl group to the free amino group of methionyl-tRNA(fMet). The formyl group appears to play a dual role in the initiator identity of N-formylmethionyl-tRNA by promoting its recognition by IF2 and preventing the misappropriation of this tRNA by the elongation apparatus. The sequence is that of Methionyl-tRNA formyltransferase from Colwellia psychrerythraea (strain 34H / ATCC BAA-681) (Vibrio psychroerythus).